The primary structure comprises 690 residues: MSNELLLEIGTEEIPAAFLPKALQDMSSMIRKALTEARIPFGQVHTFGTPRRLCLAVADVAEKQEDQVIEKLGPARRVSFDADGNPTKAALGFAKSQGVDISEIGTMQTDKGEYICISRHISGKSTVSLLSEMLSRLITSLSFKKSMRWGNLDFRFARPIHWILALYGGEVIPFRIENIESGATSRGHRFMHPEAFPVSNLQEYLARTREHFVIVAPEERKRIILEEARKAAAAVSGRVLENEDLLETVTYLVEYPTIVCGSFDRKYLELPKEVLITSMMSHQKYFPVVDQEGRLLPFFITINNTLARDPAVVTRGNEKVIRARLSDAQFFFEEDQKIRLDDRVEGLQQVVFHTLLGTSYEKVQRFRKLAGWIADRIDPSLKNRVNRSALLAKADLDTQMVGEFSELQGIMGREYALLAGEDPTVARAIYEHYLPLTAGGDLPQTHEGAIVSIADKMDSIAGFFGVNLVPTGTADPYALRRQALGVINIILDKKYPLTLDDLVDECISILEEKLKRPAEETRKDVIEFFRGRLENMLISQGHPHDVVSAVLAAGFADLVQVIKKIEAMESFKAHPAYEPLAIAFKRAGNILKEFRNGRIDPALFSAAEENQLYSTLLEARARVVKALEKDDYPAALLELAALRQPIDHFFESVMVMVDEENIRFNRLSLLEALFSIFRRIADFSRIVTES.

Belongs to the class-II aminoacyl-tRNA synthetase family. Tetramer of two alpha and two beta subunits.

The protein localises to the cytoplasm. It carries out the reaction tRNA(Gly) + glycine + ATP = glycyl-tRNA(Gly) + AMP + diphosphate. This Syntrophus aciditrophicus (strain SB) protein is Glycine--tRNA ligase beta subunit.